The following is a 146-amino-acid chain: MKKILVLNGPNLNLLGTREPEQYGRDTLADVERLCQEAGAKHGVEIECRQSNHEGVLIDWIHEAGREVAAGHMLGVVMNPGAYTHTSIALHDAIKGASVPLIELHISNVHAREEFRHHSYISPAARGIIVGLGVKGYVLAIAALVP.

Residue Tyr23 is the Proton acceptor of the active site. 3 residues coordinate substrate: Asn79, His85, and Asp92. The active-site Proton donor is His105. Residues 106 to 107 (IS) and Arg116 contribute to the substrate site.

Belongs to the type-II 3-dehydroquinase family. In terms of assembly, homododecamer.

It carries out the reaction 3-dehydroquinate = 3-dehydroshikimate + H2O. It participates in metabolic intermediate biosynthesis; chorismate biosynthesis; chorismate from D-erythrose 4-phosphate and phosphoenolpyruvate: step 3/7. Catalyzes a trans-dehydration via an enolate intermediate. The protein is 3-dehydroquinate dehydratase of Variovorax paradoxus (strain S110).